A 320-amino-acid polypeptide reads, in one-letter code: Aspartate carbamoyltransferase catalytic subunit (320 aa).

Arg-53 and Thr-54 together coordinate carbamoyl phosphate. Residue Lys-82 participates in L-aspartate binding. Residues Arg-103, His-131, and Gln-134 each coordinate carbamoyl phosphate. Residues Arg-164 and Arg-227 each contribute to the L-aspartate site. Residues Leu-266 and Pro-267 each contribute to the carbamoyl phosphate site.

This sequence belongs to the aspartate/ornithine carbamoyltransferase superfamily. ATCase family. As to quaternary structure, heterododecamer (2C3:3R2) of six catalytic PyrB chains organized as two trimers (C3), and six regulatory PyrI chains organized as three dimers (R2).

It carries out the reaction carbamoyl phosphate + L-aspartate = N-carbamoyl-L-aspartate + phosphate + H(+). The protein operates within pyrimidine metabolism; UMP biosynthesis via de novo pathway; (S)-dihydroorotate from bicarbonate: step 2/3. Catalyzes the condensation of carbamoyl phosphate and aspartate to form carbamoyl aspartate and inorganic phosphate, the committed step in the de novo pyrimidine nucleotide biosynthesis pathway. The sequence is that of Aspartate carbamoyltransferase catalytic subunit from Bifidobacterium longum subsp. infantis (strain ATCC 15697 / DSM 20088 / JCM 1222 / NCTC 11817 / S12).